The primary structure comprises 340 residues: Probable D,D-dipeptide transport system permease protein DdpB (340 aa).

Topologically, residues M1–C11 are periplasmic. The helical transmembrane segment at W12 to I32 threads the bilayer. Topologically, residues P33–A104 are cytoplasmic. Positions F97–Y327 constitute an ABC transmembrane type-1 domain. Residues F105–W125 form a helical membrane-spanning segment. Topologically, residues R126–R135 are periplasmic. The chain crosses the membrane as a helical span at residues I136 to L156. Residues F157–N199 are Cytoplasmic-facing. The helical transmembrane segment at A200–A220 threads the bilayer. At R221 to G246 the chain is on the periplasmic side. A helical membrane pass occupies residues W247 to A269. The Cytoplasmic portion of the chain corresponds to L270–L279. A helical transmembrane segment spans residues T280–L300. A topological domain (periplasmic) is located at residue D301. Residues F302–V322 traverse the membrane as a helical segment. The Cytoplasmic segment spans residues V323 to E340.

This sequence belongs to the binding-protein-dependent transport system permease family. OppBC subfamily. The complex is composed of two ATP-binding proteins (DdpD and DdpF), two transmembrane proteins (DdpB and DdpC) and a solute-binding protein (DdpA).

The protein resides in the cell inner membrane. Part of the ABC transporter complex DdpABCDF, which is probably involved in D,D-dipeptide transport. Probably responsible for the translocation of the substrate across the membrane. This chain is Probable D,D-dipeptide transport system permease protein DdpB (ddpB), found in Escherichia coli (strain K12).